Consider the following 84-residue polypeptide: UPF0473 protein CKL_1327 (84 aa).

Belongs to the UPF0473 family.

The polypeptide is UPF0473 protein CKL_1327 (Clostridium kluyveri (strain ATCC 8527 / DSM 555 / NBRC 12016 / NCIMB 10680 / K1)).